A 379-amino-acid chain; its full sequence is Chaperone protein DnaJ (379 aa).

A J domain is found at 5–70; it reads DYYEILGVSK…QKRAAYDQYG (66 aa). The CR-type zinc-finger motif lies at 134–212; it reads GVTKEIRIPT…CHGHGRVEKS (79 aa). Residues cysteine 147, cysteine 150, cysteine 164, cysteine 167, cysteine 186, cysteine 189, cysteine 200, and cysteine 203 each contribute to the Zn(2+) site. 4 CXXCXGXG motif repeats span residues 147 to 154, 164 to 171, 186 to 193, and 200 to 207; these read CDVCHGSG, CPTCHGSG, CPHCQGRG, and CHKCHGHG.

Belongs to the DnaJ family. As to quaternary structure, homodimer. Requires Zn(2+) as cofactor.

Its subcellular location is the cytoplasm. Participates actively in the response to hyperosmotic and heat shock by preventing the aggregation of stress-denatured proteins and by disaggregating proteins, also in an autonomous, DnaK-independent fashion. Unfolded proteins bind initially to DnaJ; upon interaction with the DnaJ-bound protein, DnaK hydrolyzes its bound ATP, resulting in the formation of a stable complex. GrpE releases ADP from DnaK; ATP binding to DnaK triggers the release of the substrate protein, thus completing the reaction cycle. Several rounds of ATP-dependent interactions between DnaJ, DnaK and GrpE are required for fully efficient folding. Also involved, together with DnaK and GrpE, in the DNA replication of plasmids through activation of initiation proteins. The sequence is that of Chaperone protein DnaJ from Salmonella agona (strain SL483).